The following is a 248-amino-acid chain: 3-deoxy-manno-octulosonate cytidylyltransferase (248 aa).

Belongs to the KdsB family.

The protein resides in the cytoplasm. It catalyses the reaction 3-deoxy-alpha-D-manno-oct-2-ulosonate + CTP = CMP-3-deoxy-beta-D-manno-octulosonate + diphosphate. Its pathway is nucleotide-sugar biosynthesis; CMP-3-deoxy-D-manno-octulosonate biosynthesis; CMP-3-deoxy-D-manno-octulosonate from 3-deoxy-D-manno-octulosonate and CTP: step 1/1. It participates in bacterial outer membrane biogenesis; lipopolysaccharide biosynthesis. In terms of biological role, activates KDO (a required 8-carbon sugar) for incorporation into bacterial lipopolysaccharide in Gram-negative bacteria. This chain is 3-deoxy-manno-octulosonate cytidylyltransferase, found in Chlorobium phaeobacteroides (strain BS1).